Reading from the N-terminus, the 997-residue chain is Mannuronan C5-epimerase AlgE5 (997 aa).

7 PbH1 repeats span residues aspartate 133–glutamate 155, threonine 157–phenylalanine 179, glutamine 180–threonine 202, threonine 204–arginine 226, alanine 257–glycine 279, alanine 280–glycine 315, and threonine 320–asparagine 359. 10 Hemolysin-type calcium-binding repeats span residues glycine 388–threonine 403, glycine 406–leucine 422, glycine 424–leucine 439, glycine 557–leucine 573, valine 574–leucine 590, glycine 695–glutamate 709, histidine 712–phenylalanine 729, glycine 828–serine 839, glycine 846–leucine 862, and glycine 864–phenylalanine 880.

It belongs to the D-mannuronate C5-epimerase family. Requires Ca(2+) as cofactor.

The protein resides in the secreted. It catalyses the reaction [(1-&gt;4)-beta-D-mannuronosyl](n) = [alginate](n). It functions in the pathway glycan biosynthesis; alginate biosynthesis. Inhibited by zinc. In terms of biological role, converts beta-D-mannuronic acid (M) to alpha-L-guluronic acid (G), producing a polymer with gel-forming capacity, required for the formation of the cyst coat. This is Mannuronan C5-epimerase AlgE5 from Azotobacter vinelandii.